The sequence spans 382 residues: (R,R)-butanediol dehydrogenase (382 aa).

Position 39 (cysteine 39) interacts with Zn(2+). Serine 63 carries the post-translational modification Phosphoserine. Zn(2+) contacts are provided by histidine 73, cysteine 103, cysteine 120, cysteine 123, cysteine 131, and glutamate 173.

The protein belongs to the zinc-containing alcohol dehydrogenase family. Homodimer. Zn(2+) is required as a cofactor.

Its subcellular location is the cytoplasm. The enzyme catalyses (R,R)-butane-2,3-diol + NAD(+) = (R)-acetoin + NADH + H(+). NAD-dependent (R,R)-butanediol dehydrogenase which catalyzes oxidation of (R,R)-butane-2,3-diol to (3R)-acetoin, of meso-butanediol to (3S)-acetoin, and reduction of acetoin. Allows the use of 2,3-butanediol as an aerobic carbon source. This chain is (R,R)-butanediol dehydrogenase (BDH1), found in Saccharomyces cerevisiae (strain ATCC 204508 / S288c) (Baker's yeast).